The sequence spans 515 residues: Maturase K (515 aa).

It belongs to the intron maturase 2 family. MatK subfamily.

The protein localises to the plastid. The protein resides in the chloroplast. Usually encoded in the trnK tRNA gene intron. Probably assists in splicing its own and other chloroplast group II introns. In Alpinia zerumbet (Shell ginger), this protein is Maturase K.